Here is a 386-residue protein sequence, read N- to C-terminus: DNA-directed RNA polymerase subunit Rpo1C (386 aa).

The protein belongs to the RNA polymerase beta' chain family. As to quaternary structure, part of the RNA polymerase complex.

It is found in the cytoplasm. It catalyses the reaction RNA(n) + a ribonucleoside 5'-triphosphate = RNA(n+1) + diphosphate. DNA-dependent RNA polymerase (RNAP) catalyzes the transcription of DNA into RNA using the four ribonucleoside triphosphates as substrates. Forms part of the jaw domain. The protein is DNA-directed RNA polymerase subunit Rpo1C of Methanococcus maripaludis (strain DSM 14266 / JCM 13030 / NBRC 101832 / S2 / LL).